The primary structure comprises 463 residues: tRNA (guanine(10)-N(2))-methyltransferase TRMT11 (463 aa).

A2 carries the post-translational modification N-acetylalanine.

Belongs to the class I-like SAM-binding methyltransferase superfamily. TRM11 methyltransferase family. As to quaternary structure, part of the heterodimeric TRMT11-TRM112 methyltransferase complex; this complex forms an active tRNA methyltransferase, where TRMT112 acts as an activator of the catalytic subunit TRMT11.

The protein localises to the cytoplasm. It catalyses the reaction guanosine(10) in tRNA + S-adenosyl-L-methionine = N(2)-methylguanosine(10) in tRNA + S-adenosyl-L-homocysteine + H(+). In terms of biological role, catalytic subunit of the TRMT11-TRM112 methyltransferase complex, that specifically mediates the S-adenosyl-L-methionine-dependent N(2)-methylation of guanosine nucleotide at position 10 (m2G10) in tRNAs. This is one of the major tRNA (guanine-N(2))-methyltransferases. This chain is tRNA (guanine(10)-N(2))-methyltransferase TRMT11, found in Homo sapiens (Human).